Consider the following 359-residue polypeptide: Innexin inx2 (359 aa).

The Cytoplasmic segment spans residues 1–22; sequence MFDVFGSVKGLLKLDSVCIDNN. A helical transmembrane segment spans residues 23–43; it reads LFRLHYKATVIILIAFSLLVT. Residues 44 to 109 lie on the Extracellular side of the membrane; it reads SRQYIGDPID…KDEVKYHKYY (66 aa). The chain crosses the membrane as a helical span at residues 110-130; sequence QWVCFVLFFQAILFYIPRYLW. Residues 131 to 180 lie on the Cytoplasmic side of the membrane; sequence KTWEGGRIKMLVLDLNSPVVNEQSKADRKKLLVDYFATNLHTQNFYAYRF. Residues 181–201 traverse the membrane as a helical segment; it reads FICEALNFVNVVGQIYFMDLF. The Extracellular segment spans residues 202–266; that stretch reads LDGEFTTYGS…VLPLNIVNEK (65 aa). A helical transmembrane segment spans residues 267–287; the sequence is IYVFLWFWFVILSVLTGIGLV. The Cytoplasmic segment spans residues 288–359; that stretch reads YRLATAMGPQ…AKKLEGKEIV (72 aa).

The protein belongs to the pannexin family. In terms of tissue distribution, widespread expression in embryo, in anterior and posterior row of neural precursors, midline precursors and in epithelial sheet of stomodeum.

It localises to the cell membrane. The protein localises to the cell junction. It is found in the gap junction. Functionally, structural components of the gap junctions. This is Innexin inx2 (inx2) from Schistocerca americana (American grasshopper).